Consider the following 393-residue polypeptide: MEITMGVMDENATNTSTNYFPLLDPLGAQAASFPFNFSYGDYDMPLDEDEDMTNSRTFFAAKIVIGMALVGIMLVCGIGNFIFIAALARYKKLRNLTNLLIANLAISDFLVAIVCCPFEMDYYVVRQLSWEHGHVLCASVNYLRTVSLYVSTNALLAIAIDRYLAIVHPLRPRMKYQTATGLIALVWVVSILVAIPSAYFTTETVLVIVKSQEKIFCGQIWPVDQQIYYKSYFLFIFGIEFVGPVVTMTLCYARISRELWFKAVPGFQTEQIRKRLRCRRKTVLVLMCILTAYVLCWAPFYGFAIVRDFFPTVFVKEKHYLTAFYVVECIAMSNSMINTVCFVTVKNNTIKYFKKIMLLHWKASYNGSKSSGDLDLKTTGVPATEEVDCIGLK.

The Extracellular portion of the chain corresponds to 1–63 (MEITMGVMDE…NSRTFFAAKI (63 aa)). N-linked (GlcNAc...) asparagine glycans are attached at residues asparagine 11, asparagine 14, and asparagine 36. A helical transmembrane segment spans residues 64–84 (VIGMALVGIMLVCGIGNFIFI). Over 85–98 (AALARYKKLRNLTN) the chain is Cytoplasmic. The helical transmembrane segment at 99–119 (LLIANLAISDFLVAIVCCPFE) threads the bilayer. Topologically, residues 120–145 (MDYYVVRQLSWEHGHVLCASVNYLRT) are extracellular. A disulfide bridge connects residues cysteine 137 and cysteine 217. A helical membrane pass occupies residues 146–166 (VSLYVSTNALLAIAIDRYLAI). The Cytoplasmic segment spans residues 167-179 (VHPLRPRMKYQTA). Residues 180–200 (TGLIALVWVVSILVAIPSAYF) form a helical membrane-spanning segment. Topologically, residues 201 to 232 (TTETVLVIVKSQEKIFCGQIWPVDQQIYYKSY) are extracellular. A helical membrane pass occupies residues 233–253 (FLFIFGIEFVGPVVTMTLCYA). Topologically, residues 254 to 282 (RISRELWFKAVPGFQTEQIRKRLRCRRKT) are cytoplasmic. Residues 283–303 (VLVLMCILTAYVLCWAPFYGF) traverse the membrane as a helical segment. Residues 304-322 (AIVRDFFPTVFVKEKHYLT) are Extracellular-facing. The chain crosses the membrane as a helical span at residues 323–343 (AFYVVECIAMSNSMINTVCFV). Topologically, residues 344–393 (TVKNNTIKYFKKIMLLHWKASYNGSKSSGDLDLKTTGVPATEEVDCIGLK) are cytoplasmic.

This sequence belongs to the G-protein coupled receptor 1 family.

It localises to the cell membrane. Its function is as follows. Receptor for prokineticin 1. Exclusively coupled to the G(q) subclass of heteromeric G proteins. Activation leads to mobilization of calcium, stimulation of phosphoinositide turnover and activation of p44/p42 mitogen-activated protein kinase. May play a role during early pregnancy. The protein is Prokineticin receptor 1 (PROKR1) of Bos taurus (Bovine).